The sequence spans 98 residues: Large ribosomal subunit protein bL25 (98 aa).

The tract at residues 1-23 (MANFVLNAQARAEDKQGKGASRR) is disordered.

Belongs to the bacterial ribosomal protein bL25 family. In terms of assembly, part of the 50S ribosomal subunit; part of the 5S rRNA/L5/L18/L25 subcomplex. Contacts the 5S rRNA. Binds to the 5S rRNA independently of L5 and L18.

Functionally, this is one of the proteins that binds to the 5S RNA in the ribosome where it forms part of the central protuberance. The protein is Large ribosomal subunit protein bL25 of Acinetobacter baumannii (strain AB307-0294).